Here is a 304-residue protein sequence, read N- to C-terminus: Ribokinase (304 aa).

Substrate-binding positions include 12 to 14 (NVD), 41 to 45 (GKGAN), and Glu142. Residues Asn186 and 222-227 (TLGKQG) each bind ATP. The K(+) site is built by Asp248 and Thr250. Residues 253 to 254 (GD) and Asn279 contribute to the ATP site. Asp254 provides a ligand contact to substrate. Catalysis depends on Asp254, which acts as the Proton acceptor. K(+) contacts are provided by Thr285, Lys288, Gly290, and Ser294.

Belongs to the carbohydrate kinase PfkB family. Ribokinase subfamily. Homodimer. Mg(2+) serves as cofactor.

The protein localises to the cytoplasm. It carries out the reaction D-ribose + ATP = D-ribose 5-phosphate + ADP + H(+). The protein operates within carbohydrate metabolism; D-ribose degradation; D-ribose 5-phosphate from beta-D-ribopyranose: step 2/2. Activated by a monovalent cation that binds near, but not in, the active site. The most likely occupant of the site in vivo is potassium. Ion binding induces a conformational change that may alter substrate affinity. In terms of biological role, catalyzes the phosphorylation of ribose at O-5 in a reaction requiring ATP and magnesium. The resulting D-ribose-5-phosphate can then be used either for sythesis of nucleotides, histidine, and tryptophan, or as a component of the pentose phosphate pathway. This chain is Ribokinase, found in Staphylococcus aureus (strain COL).